A 254-amino-acid chain; its full sequence is Ribonuclease HII (254 aa).

The 189-residue stretch at 46 to 234 (KLIAGIDEVG…VWMASAPQEV (189 aa)) folds into the RNase H type-2 domain. A divalent metal cation-binding residues include Asp-52, Glu-53, and Asp-144.

The protein belongs to the RNase HII family. Requires Mn(2+) as cofactor. The cofactor is Mg(2+).

The protein resides in the cytoplasm. The enzyme catalyses Endonucleolytic cleavage to 5'-phosphomonoester.. Functionally, endonuclease that specifically degrades the RNA of RNA-DNA hybrids. The sequence is that of Ribonuclease HII from Koribacter versatilis (strain Ellin345).